We begin with the raw amino-acid sequence, 439 residues long: Secreted RxLR effector protein 117 (439 aa).

A signal peptide spans 1–21; sequence MRGAYYVLAALLVVASSQIAA. A RxLR-dEER motif is present at residues 48-65; sequence RYLRGGHDVHDDSANEER.

This sequence belongs to the RxLR effector family.

The protein resides in the secreted. Its subcellular location is the host nucleus. Its function is as follows. Secreted effector that acts as an elicitor that induces cell death in host plant cells. This Plasmopara viticola (Downy mildew of grapevine) protein is Secreted RxLR effector protein 117.